Reading from the N-terminus, the 108-residue chain is Replication initiation control protein YabA (108 aa).

4 residues coordinate Zn(2+): histidine 82, cysteine 84, cysteine 98, and cysteine 101.

It belongs to the YabA family. As to quaternary structure, homotetramer. Interacts with both DnaA and DnaN, acting as a bridge between these two proteins. It depends on Zn(2+) as a cofactor.

It localises to the cytoplasm. It is found in the nucleoid. Its function is as follows. Involved in control of chromosome replication initiation. Inhibits the cooperative binding of DnaA to the oriC region, thus negatively regulating initiation of chromosome replication. Inhibits the ability of DnaA-ATP to form a helix on DNA; does not disassemble preformed DnaA-DNA helices. Decreases the residence time of DnaA on the chromosome at its binding sites (oriC, replication forks and promoter-binding sites). Tethers DnaA to the replication machinery via the DNA polymerase beta sliding clamp subunit (dnaN). Associates with oriC and other DnaA targets on the chromosome in a DnaA-dependent manner. This chain is Replication initiation control protein YabA, found in Streptococcus agalactiae serotype Ia (strain ATCC 27591 / A909 / CDC SS700).